Consider the following 228-residue polypeptide: DNA mismatch repair protein MutH (228 aa).

Belongs to the MutH family.

It localises to the cytoplasm. Sequence-specific endonuclease that cleaves unmethylated GATC sequences. It is involved in DNA mismatch repair. This Photorhabdus laumondii subsp. laumondii (strain DSM 15139 / CIP 105565 / TT01) (Photorhabdus luminescens subsp. laumondii) protein is DNA mismatch repair protein MutH.